A 404-amino-acid chain; its full sequence is Argininosuccinate synthase (404 aa).

Residues 10–18 (AYSGGVDTS) and Ala-38 each bind ATP. Tyr-89 provides a ligand contact to L-citrulline. An ATP-binding site is contributed by Gly-119. L-aspartate contacts are provided by Thr-121, Asn-125, and Asp-126. Asn-125 serves as a coordination point for L-citrulline. L-citrulline-binding residues include Arg-129, Ser-177, Ser-186, Glu-262, and Tyr-274.

It belongs to the argininosuccinate synthase family. Type 1 subfamily. Homotetramer.

It is found in the cytoplasm. It carries out the reaction L-citrulline + L-aspartate + ATP = 2-(N(omega)-L-arginino)succinate + AMP + diphosphate + H(+). It participates in amino-acid biosynthesis; L-arginine biosynthesis; L-arginine from L-ornithine and carbamoyl phosphate: step 2/3. This Prochlorococcus marinus (strain MIT 9215) protein is Argininosuccinate synthase.